The sequence spans 242 residues: DNA repair protein RecO (242 aa).

It belongs to the RecO family.

Functionally, involved in DNA repair and RecF pathway recombination. In Bacteroides fragilis (strain ATCC 25285 / DSM 2151 / CCUG 4856 / JCM 11019 / LMG 10263 / NCTC 9343 / Onslow / VPI 2553 / EN-2), this protein is DNA repair protein RecO.